Reading from the N-terminus, the 605-residue chain is Elongation factor 4 (605 aa).

The 184-residue stretch at 9–192 (CRIRNFCIIA…SIVHRIPPPA (184 aa)) folds into the tr-type G domain. GTP contacts are provided by residues 21 to 26 (DHGKST) and 139 to 142 (NKID).

It belongs to the TRAFAC class translation factor GTPase superfamily. Classic translation factor GTPase family. LepA subfamily.

The protein resides in the cell inner membrane. The catalysed reaction is GTP + H2O = GDP + phosphate + H(+). Functionally, required for accurate and efficient protein synthesis under certain stress conditions. May act as a fidelity factor of the translation reaction, by catalyzing a one-codon backward translocation of tRNAs on improperly translocated ribosomes. Back-translocation proceeds from a post-translocation (POST) complex to a pre-translocation (PRE) complex, thus giving elongation factor G a second chance to translocate the tRNAs correctly. Binds to ribosomes in a GTP-dependent manner. The polypeptide is Elongation factor 4 (Chlorobium chlorochromatii (strain CaD3)).